A 1462-amino-acid chain; its full sequence is METKRRYKMYKVKKHWVTIAVASGLITLGTTTLGSSVSAETEQQTSDKVVTQKSEDDKAASESSQTDAPKTKQAQTEQTQAQSQANVADTSTSITKETPSQNITTQANSDDKTVTNTKSEEAQTSEERTKQAEEAQATASSQALTQAKAELTKQRQTAAQENKNPVDLAAIPNVKQIDGKYYYIGSDGQPKKNFALTVNNKVLYFDKNTGALTDTSQYQFKQGLTKLNNDYTPHNQIVNFENTSLETIDNYVTADSWYRPKDILKNGKTWTASSESDLRPLLMSWWPDKQTQIAYLNYMNQQGLGTGENYTADSSQESLNLAAQTVQVKIETKISQTQQTQWLRDIINSFVKTQPNWNSQTESDTSAGEKDHLQGGALLYSNSDKTAYANSDYRLLNRTPTSQTGKPKYFEDNSSGGYDFLLANDIDNSNPVVQAEQLNWLHYLMNYGSIVANDPEANFDGVRVDAVDNVNADLLQIASDYLKAHYGVDKSEKNAINHLSILEAWSDNDPQYNKDTKGAQLPIDNKLRLSLLYALTRPLEKDASNKNEIRSGLEPVITNSLNNRSAEGKNSERMANYIFIRAHDSEVQTVIAKIIKAQINPKTDGLTFTLDELKQAFKIYNEDMRQAKKKYTQSNIPTAYALMLSNKDSITRLYYGDMYSDDGQYMATKSPYYDAIDTLLKARIKYAAGGQDMKITYVEGDKSHMDWDYTGVLTSVRYGTGANEATDQGSEATKTQGMAVITSNNPSLKLNQNDKVIVNMGTAHKNQEYRPLLLTTKDGLTSYTSDAAAKSLYRKTNDKGELVFDASDIQGYLNPQVSGYLAVWVPVGASDNQDVRVAASNKANATGQVYESSSALDSQLIYEGFSNFQDFVTKDSDYTNKKIAQNVQLFKSWGVTSFEMAPQYVSSEDGSFLDSIIQNGYAFEDRYDLAMSKNNKYGSQQDMINAVKALHKSGIQVIADWVPDQIYNLPGKEVVTATRVNDYGEYRKDSEIKNTLYAANTKSNGKDYQAKYGGAFLSELAAKYPSIFNRTQISNGKKIDPSEKITAWKAKYFNGTNILGRGVGYVLKDNASDKYFELKGNQTYLPKQMTNKEASTGFVNDGNGMTFYSTSGYQAKNSFVQDAKGNWYYFDNNGHMVYGLQHLNGEVQYFLSNGVQLRESFLENADGSKNYFGHLGNRYSNGYYSFDNDSKWRYFDASGVMAVGLKTINGNTQYFDQDGYQVKGAWITGSDGKKRYFDDGSGNMAVNRFANDKNGDWYYLNSDGIALVGVQTINGKTYYFGQDGKQIKGKIITDNGKLKYFLANSGELARNIFATDSQNNWYYFGSDGVAVTGSQTIAGKKLYFASDGKQVKGSFVTYNGKVHYYHADSGELQVNRFEADKDGNWYYLDSNGEALTGSQRINGQRVFFTREGKQVKGDVAYDERGLLRYYDKNSGNMVYNKVVTLANGRRIGIDRWGIARYY.

Positions 35-164 (SSVSAETEQQ…RQTAAQENKN (130 aa)) are disordered. The span at 37–52 (VSAETEQQTSDKVVTQ) shows a compositional bias: polar residues. Over residues 71–85 (TKQAQTEQTQAQSQA) the composition is skewed to low complexity. Over residues 86–108 (NVADTSTSITKETPSQNITTQAN) the composition is skewed to polar residues. Residues 109 to 133 (SDDKTVTNTKSEEAQTSEERTKQAE) show a composition bias toward basic and acidic residues. Residues 134–149 (EAQATASSQALTQAKA) are compositionally biased toward low complexity. The segment covering 154-163 (QRQTAAQENK) has biased composition (polar residues). Cell wall-binding repeat units follow at residues 171–190 (IPNV…DGQP), 192–211 (KNFA…NTGA), 1095–1115 (STGF…GYQA), 1116–1136 (KNSF…NGHM), 1137–1156 (VYGL…NGVQ), 1180–1201 (SNGY…SGVM), 1202–1221 (AVGL…DGYQ), 1223–1244 (KGAW…SGNM), 1246–1266 (VNRF…DGIA), 1267–1286 (LVGV…DGKQ), 1310–1330 (RNIF…DGVA), 1331–1350 (VTGS…DGKQ), 1352–1372 (KGSF…SGEL), and 1374–1394 (VNRF…NGEA).

This sequence belongs to the glycosyl hydrolase 70 family.

The protein localises to the secreted. It catalyses the reaction [(1-&gt;6)-alpha-D-glucosyl](n) + sucrose = [(1-&gt;6)-alpha-D-glucosyl](n+1) + D-fructose. Production of extracellular glucans, that are thought to play a key role in the development of the dental plaque because of their ability to adhere to smooth surfaces and mediate the aggregation of bacterial cells and food debris. In Streptococcus mutans serotype c (strain ATCC 700610 / UA159), this protein is Glucosyltransferase-S (gtfD).